Reading from the N-terminus, the 244-residue chain is 3-deoxy-manno-octulosonate cytidylyltransferase (244 aa).

The protein belongs to the KdsB family.

It localises to the cytoplasm. It carries out the reaction 3-deoxy-alpha-D-manno-oct-2-ulosonate + CTP = CMP-3-deoxy-beta-D-manno-octulosonate + diphosphate. The protein operates within nucleotide-sugar biosynthesis; CMP-3-deoxy-D-manno-octulosonate biosynthesis; CMP-3-deoxy-D-manno-octulosonate from 3-deoxy-D-manno-octulosonate and CTP: step 1/1. Its pathway is bacterial outer membrane biogenesis; lipopolysaccharide biosynthesis. Functionally, activates KDO (a required 8-carbon sugar) for incorporation into bacterial lipopolysaccharide in Gram-negative bacteria. In Synechococcus elongatus (strain ATCC 33912 / PCC 7942 / FACHB-805) (Anacystis nidulans R2), this protein is 3-deoxy-manno-octulosonate cytidylyltransferase.